The chain runs to 125 residues: Large ribosomal subunit protein bL12 (125 aa).

It belongs to the bacterial ribosomal protein bL12 family. In terms of assembly, homodimer. Part of the ribosomal stalk of the 50S ribosomal subunit. Forms a multimeric L10(L12)X complex, where L10 forms an elongated spine to which 2 to 4 L12 dimers bind in a sequential fashion. Binds GTP-bound translation factors.

Forms part of the ribosomal stalk which helps the ribosome interact with GTP-bound translation factors. Is thus essential for accurate translation. In Helicobacter pylori (strain HPAG1), this protein is Large ribosomal subunit protein bL12.